We begin with the raw amino-acid sequence, 175 residues long: Adenine phosphoribosyltransferase (175 aa).

It belongs to the purine/pyrimidine phosphoribosyltransferase family. Homodimer.

It is found in the cytoplasm. The catalysed reaction is AMP + diphosphate = 5-phospho-alpha-D-ribose 1-diphosphate + adenine. It participates in purine metabolism; AMP biosynthesis via salvage pathway; AMP from adenine: step 1/1. In terms of biological role, catalyzes a salvage reaction resulting in the formation of AMP, that is energically less costly than de novo synthesis. The protein is Adenine phosphoribosyltransferase of Thermosipho melanesiensis (strain DSM 12029 / CIP 104789 / BI429).